We begin with the raw amino-acid sequence, 270 residues long: MPELPEVETTRRGIAPHLEGQRVSRVVVRERRLRWPIPEDLDVRLSGQRIVLVERRAKYLLINAEVGTLISHLGMSGNLRLVEVGLPAAKHEHVDIELESGMALRYTDPRRFGAMLWSQDPHNHELLLRLGPEPLTELFDGDRLFQLSRGKSMAVKPFIMDNAVVVGVGNIYATEALFAAGIDPRRAAGGISRGRYLKLAIEIKRVLAAAIERGGTTLRDFIGGDGQPGYFQQELFVYGRGGEACKVCGTELRNVVLGQRASVFCPRCQR.

Catalysis depends on P2, which acts as the Schiff-base intermediate with DNA. E3 acts as the Proton donor in catalysis. Catalysis depends on K58, which acts as the Proton donor; for beta-elimination activity. Positions 91, 110, and 151 each coordinate DNA. The FPG-type zinc finger occupies 236–270 (FVYGRGGEACKVCGTELRNVVLGQRASVFCPRCQR). The active-site Proton donor; for delta-elimination activity is the R260.

The protein belongs to the FPG family. In terms of assembly, monomer. Requires Zn(2+) as cofactor.

The enzyme catalyses Hydrolysis of DNA containing ring-opened 7-methylguanine residues, releasing 2,6-diamino-4-hydroxy-5-(N-methyl)formamidopyrimidine.. The catalysed reaction is 2'-deoxyribonucleotide-(2'-deoxyribose 5'-phosphate)-2'-deoxyribonucleotide-DNA = a 3'-end 2'-deoxyribonucleotide-(2,3-dehydro-2,3-deoxyribose 5'-phosphate)-DNA + a 5'-end 5'-phospho-2'-deoxyribonucleoside-DNA + H(+). Its function is as follows. Involved in base excision repair of DNA damaged by oxidation or by mutagenic agents. Acts as a DNA glycosylase that recognizes and removes damaged bases. Has a preference for oxidized purines, such as 7,8-dihydro-8-oxoguanine (8-oxoG). Has AP (apurinic/apyrimidinic) lyase activity and introduces nicks in the DNA strand. Cleaves the DNA backbone by beta-delta elimination to generate a single-strand break at the site of the removed base with both 3'- and 5'-phosphates. This is Formamidopyrimidine-DNA glycosylase from Pseudomonas fluorescens (strain SBW25).